Consider the following 60-residue polypeptide: Small ribosomal subunit protein bS21 (60 aa).

The tract at residues 36-60 is disordered; sequence QFFETPQEKHKRKEATRRRQRSRRR. Residues 44–60 are compositionally biased toward basic residues; the sequence is KHKRKEATRRRQRSRRR.

This sequence belongs to the bacterial ribosomal protein bS21 family.

In Synechocystis sp. (strain ATCC 27184 / PCC 6803 / Kazusa), this protein is Small ribosomal subunit protein bS21 (rpsU).